The chain runs to 279 residues: HTH-type transcriptional activator RhaS (279 aa).

In terms of domain architecture, HTH araC/xylS-type spans 175 to 273 (QALLGWLQNN…SQAPKSLRHQ (99 aa)). 2 consecutive DNA-binding regions (H-T-H motif) follow at residues 192–213 (GSLA…KQHT) and 240–263 (ITTI…RKAF).

As to quaternary structure, binds DNA as a dimer.

Its subcellular location is the cytoplasm. Its function is as follows. Activates expression of the rhaBAD and rhaT operons. This chain is HTH-type transcriptional activator RhaS, found in Pectobacterium carotovorum subsp. carotovorum (strain PC1).